The chain runs to 226 residues: Ras-related protein Rab11A (226 aa).

GTP is bound by residues 24-32, 43-49, 72-76, 130-133, and 160-162; these read GDSAVGKSQ, SLDSKST, DTAGQ, NKCD, and SAL. The short motif at 46-54 is the Effector region element; sequence SKSTIGVEF. 2 S-geranylgeranyl cysteine lipidation sites follow: C222 and C223. C223 is subject to Cysteine methyl ester. The propeptide at 224–226 is removed in mature form; that stretch reads QAS.

Belongs to the small GTPase superfamily. Rab family.

The protein localises to the cell membrane. This is Ras-related protein Rab11A (RAB11A) from Lotus japonicus (Lotus corniculatus var. japonicus).